The following is a 2530-amino-acid chain: Agglutinin-like protein 2 (2530 aa).

The signal sequence occupies residues 1 to 17 (MLLQFLLLSLCVSVATA). 4 cysteine pairs are disulfide-bonded: cysteine 73-cysteine 150, cysteine 96-cysteine 112, cysteine 205-cysteine 297, and cysteine 227-cysteine 256. N-linked (GlcNAc...) asparagine glycosylation is found at asparagine 253 and asparagine 315. ALS repeat units lie at residues 364–395 (TTIT…VDVP), 400–431 (TTVT…VQVP), 437–468 (VTTT…IREP), 473–504 (VTTT…IREP), 509–540 (VTTT…IREP), and 545–576 (VTTT…IREP). Asparagine 578 carries N-linked (GlcNAc...) asparagine glycosylation. An ALS 7 repeat occupies 581–612 (VTTTEYWSQSYVTTSTITAPPGGTDTVIIREP). The N-linked (GlcNAc...) asparagine glycan is linked to asparagine 614. ALS repeat units lie at residues 617–648 (VTTT…IREP), 653–684 (VTTT…IREP), 689–720 (VTTT…IREP), 725–756 (VTTT…IREP), 761–792 (VTTT…IREP), 797–828 (VTTT…IREP), and 833–864 (VTTT…IREP). N-linked (GlcNAc...) asparagine glycosylation occurs at asparagine 866. 4 ALS repeats span residues 869–900 (VTTT…IREP), 905–936 (VTTT…IREP), 941–972 (VTTT…IREP), and 977–1008 (VTTT…IREP). Low complexity predominate over residues 954 to 967 (TTTVTGPPGGTDTV). The tract at residues 954–975 (TTTVTGPPGGTDTVIIREPPNP) is disordered. An N-linked (GlcNAc...) asparagine glycan is attached at asparagine 1010. ALS repeat units lie at residues 1013 to 1044 (VTTT…IREP), 1049 to 1077 (VTTT…TVII), 1085 to 1116 (VTTT…IREP), and 1121 to 1152 (VTTT…IREP). A glycan (N-linked (GlcNAc...) asparagine) is linked at asparagine 1154. ALS repeat units follow at residues 1157 to 1188 (VTTT…IREP), 1193 to 1224 (VTTT…IREP), 1229 to 1260 (VTTT…IREP), 1265 to 1296 (VTTT…IREP), 1301 to 1332 (VTTT…IREP), and 1337 to 1368 (VTTT…IREP). An N-linked (GlcNAc...) asparagine glycan is attached at asparagine 1370. Residues 1373 to 1404 (VTTTEYWSQSYATTTTVTAPPGGTATVIIREP) form an ALS 29 repeat. Residue asparagine 1406 is glycosylated (N-linked (GlcNAc...) asparagine). The ALS 30 repeat unit spans residues 1409-1440 (VTTTEYWSQSYATTTTITAPPGDTDTVIIREP). Residue asparagine 1442 is glycosylated (N-linked (GlcNAc...) asparagine). ALS repeat units follow at residues 1445 to 1476 (VTTT…IREP) and 1481 to 1512 (VTTT…IREP). The N-linked (GlcNAc...) asparagine glycan is linked to asparagine 1514. One copy of the ALS 33 repeat lies at 1517 to 1548 (VTTTEYWSQSYATTTTVTAPPGGTATVIIREP). An N-linked (GlcNAc...) asparagine glycan is attached at asparagine 1550. One copy of the ALS 34 repeat lies at 1553–1584 (VTTTEYWSQSYATTTTITAPPGDTDTVIIREP). Asparagine 1586 carries N-linked (GlcNAc...) asparagine glycosylation. The ALS 35 repeat unit spans residues 1589–1620 (VTTTEYWSQSYATTTTVTAPPGGTDTVIIREP). A glycan (N-linked (GlcNAc...) asparagine) is linked at asparagine 1622. The stretch at 1625 to 1656 (VTTTEYWSQSYATTTTVTAPPGGTATVIIREP) is one ALS 36 repeat. The N-linked (GlcNAc...) asparagine glycan is linked to asparagine 1658. 2 ALS repeats span residues 1661-1692 (VTTT…IREP) and 1697-1728 (VTTT…IREP). An N-linked (GlcNAc...) asparagine glycan is attached at asparagine 1730. An ALS 39 repeat occupies 1733–1764 (VTTTEYWSQSYATTTTVTAPPGGTDTVIIREP). N-linked (GlcNAc...) asparagine glycosylation occurs at asparagine 1766. ALS repeat units lie at residues 1769-1800 (VTTT…IREP) and 1805-1836 (VTTT…IREP). Residue asparagine 1838 is glycosylated (N-linked (GlcNAc...) asparagine). 2 ALS repeats span residues 1841-1872 (VTTT…IREP) and 1877-1907 (VTTT…RIRE). An N-linked (GlcNAc...) asparagine glycan is attached at asparagine 1910. 2 ALS repeats span residues 1913–1944 (VTTT…IREP) and 1949–1980 (VTTT…IREP). N-linked (GlcNAc...) asparagine glycosylation is present at asparagine 1982. 3 ALS repeats span residues 1985 to 2016 (VTTT…IREP), 2021 to 2052 (VTTT…IREP), and 2057 to 2088 (VTTT…IREP). N-linked (GlcNAc...) asparagine glycosylation occurs at asparagine 2090. ALS repeat units lie at residues 2093-2124 (VTTT…IREP) and 2129-2157 (VTTT…SVII). Residue asparagine 2197 is glycosylated (N-linked (GlcNAc...) asparagine). 2 disordered regions span residues 2200–2235 (VTHL…GSEN) and 2274–2494 (TTII…QQTT). Low complexity predominate over residues 2204–2233 (PSSSSKPVDIPSSDVVTSTNDNSLTSLTGS). An N-linked (GlcNAc...) asparagine glycan is attached at asparagine 2281. A compositionally biased stretch (low complexity) spans 2282-2296 (GSGKSKSGELSSTGS). Polar residues-rich tracts occupy residues 2329–2420 (STET…SATA) and 2429–2452 (NGAT…TTNI). Asparagine 2444 and asparagine 2466 each carry an N-linked (GlcNAc...) asparagine glycan. Low complexity-rich tracts occupy residues 2453–2471 (QGGN…TGEP) and 2482–2494 (SISQ…QQTT). Aspartate 2507 is lipidated: GPI-anchor amidated aspartate. The propeptide at 2508–2530 (GSGSIVQHSGWLYVLLTAISIFF) is removed in mature form.

Belongs to the ALS family. In terms of processing, N-glycosylated and O-glycosylated. Post-translationally, the GPI-anchor is attached to the protein in the endoplasmic reticulum and serves to target the protein to the cell surface. There, the glucosamine-inositol phospholipid moiety is cleaved off and the GPI-modified mannoprotein is covalently attached via its lipidless GPI glycan remnant to the 1,6-beta-glucan of the outer cell wall layer.

The protein resides in the cell membrane. It is found in the secreted. The protein localises to the cell wall. Functionally, cell surface adhesion protein which mediates both yeast-to-host tissue adherence and yeast aggregation. Plays an important role in the pathogenesis of C.albicans infections. The polypeptide is Agglutinin-like protein 2 (ALS2) (Candida albicans (strain SC5314 / ATCC MYA-2876) (Yeast)).